Reading from the N-terminus, the 533-residue chain is Nuclear receptor corepressor 1 (533 aa).

Residues 1-17 show a composition bias toward basic and acidic residues; that stretch reads KDKGPPPKSRYEEELRT. A disordered region spans residues 1 to 21; that stretch reads KDKGPPPKSRYEEELRTRGKT. Residues 29-33 carry the CORNR box 1 motif; that stretch reads IDVII. A disordered region spans residues 37 to 144; that stretch reads IASDKDARER…EGMGQVPRTH (108 aa). Residues 38–47 are compositionally biased toward basic and acidic residues; that stretch reads ASDKDARERG. Residues 48–59 show a composition bias toward low complexity; sequence SQSSDSSSSLSS. A phosphoserine mark is found at serine 73 and serine 77. The interval 130–209 is ID1; that stretch reads PSSQAEGMGQ…QSQTVLHPRP (80 aa). Positions 145–148 are required for interaction with RARA in the absence of its ligand; that stretch reads RLIT. Positions 153–157 match the CORNR box 2 motif; sequence ICQII. Residues 165–180 are compositionally biased toward low complexity; that stretch reads QVPSQPSTSTFQTSPS. Residues 165 to 254 are disordered; that stretch reads QVPSQPSTST…SPPQGPAVHE (90 aa). Polar residues predominate over residues 181–204; that stretch reads ALSSTPVRTKPSSRYSPESQSQTV. A phosphoserine mark is found at serine 196, serine 214, serine 230, serine 245, and serine 278. The segment covering 218-236 has biased composition (basic and acidic residues); sequence LVDKSRGSRPGKSPERSHI. The interval 306 to 367 is ID2; the sequence is IFRKLNSSGG…EDIIRKALMG (62 aa). The CORNR box 3 signature appears at 357–361; the sequence is LEDII. Over residues 382-399 the composition is skewed to low complexity; the sequence is HPVGVVPGSASTSVVTSS. The interval 382–476 is disordered; it reads HPVGVVPGSA…RPSSTGSTQF (95 aa). At threonine 492 the chain carries Phosphothreonine. 2 positions are modified to phosphoserine: serine 529 and serine 531.

It belongs to the N-CoR nuclear receptor corepressors family. Forms a large corepressor complex that contains SIN3A/B and histone deacetylases HDAC1 and HDAC2. This complex associates with the thyroid receptor (TR) and the retinoid acid receptor (RAR) in the absence of ligand. Interacts directly with RARA; the interaction is facilitated with RARA trimethylation. Component of the N-Cor repressor complex, at least composed of CBFA2T3, HEXIM1, NCOR1, NCOR2, HDAC3, TBL1X, TBL1XR1, CORO2A and GPS2. Interacts with ZBTB33; the interaction serves to recruit the N-CoR complex to promoter regions containing methylated CpG dinucleotides. Interacts with TRIM28 and KDM3A. Interacts (via the RD1 domain) with BAZ1A (via its N-terminal); the interaction corepresses a number of NCOR1-regulated genes. Interacts with BCL6, C1D, DACH1, HEXIM1, HDAC7, RORA, RORC, SAP30, SIAH2, SIN3A and SIN3B. May interact with DEAF1. Interacts with RXRA. Interacts with SETD5. Interacts with VDR. Interacts with ZBTB7A. Interacts with AR. Interacts with HDAC3. Ubiquitinated; mediated by SIAH2 and leading to its subsequent proteasomal degradation.

It localises to the nucleus. Functionally, mediates transcriptional repression by certain nuclear receptors. Part of a complex which promotes histone deacetylation and the formation of repressive chromatin structures which may impede the access of basal transcription factors. Participates in the transcriptional repressor activity produced by BCL6. Recruited by ZBTB7A to the androgen response elements/ARE on target genes, negatively regulates androgen receptor signaling and androgen-induced cell proliferation. Mediates the NR1D1-dependent repression and circadian regulation of TSHB expression. The NCOR1-HDAC3 complex regulates the circadian expression of the core clock gene ARTNL/BMAL1 and the genes involved in lipid metabolism in the liver. This chain is Nuclear receptor corepressor 1 (Ncor1), found in Rattus norvegicus (Rat).